The chain runs to 143 residues: Large ribosomal subunit protein uL11 (143 aa).

Belongs to the universal ribosomal protein uL11 family. Part of the ribosomal stalk of the 50S ribosomal subunit. Interacts with L10 and the large rRNA to form the base of the stalk. L10 forms an elongated spine to which L12 dimers bind in a sequential fashion forming a multimeric L10(L12)X complex. Post-translationally, one or more lysine residues are methylated.

Functionally, forms part of the ribosomal stalk which helps the ribosome interact with GTP-bound translation factors. The polypeptide is Large ribosomal subunit protein uL11 (Caulobacter vibrioides (strain ATCC 19089 / CIP 103742 / CB 15) (Caulobacter crescentus)).